The sequence spans 610 residues: Glutamine--fructose-6-phosphate aminotransferase [isomerizing] (610 aa).

Catalysis depends on Cys-2, which acts as the Nucleophile; for GATase activity. The region spanning 2-219 is the Glutamine amidotransferase type-2 domain; the sequence is CGIVGAVAQR…EGDVAEITRR (218 aa). SIS domains lie at 287 to 427 and 459 to 600; these read ADEL…LRGM and LAEG…VDQP. Lys-605 serves as the catalytic For Fru-6P isomerization activity.

In terms of assembly, homodimer.

The protein localises to the cytoplasm. It carries out the reaction D-fructose 6-phosphate + L-glutamine = D-glucosamine 6-phosphate + L-glutamate. Its function is as follows. Catalyzes the first step in hexosamine metabolism, converting fructose-6P into glucosamine-6P using glutamine as a nitrogen source. This chain is Glutamine--fructose-6-phosphate aminotransferase [isomerizing], found in Pectobacterium atrosepticum (strain SCRI 1043 / ATCC BAA-672) (Erwinia carotovora subsp. atroseptica).